We begin with the raw amino-acid sequence, 221 residues long: Transcription antitermination protein NusB (221 aa).

Belongs to the NusB family.

Involved in transcription antitermination. Required for transcription of ribosomal RNA (rRNA) genes. Binds specifically to the boxA antiterminator sequence of the ribosomal RNA (rrn) operons. In Synechocystis sp. (strain ATCC 27184 / PCC 6803 / Kazusa), this protein is Transcription antitermination protein NusB.